A 316-amino-acid polypeptide reads, in one-letter code: MTKPPLTLYLAAPRGFCAGVDRAIKIVELALDKWGAPVYVRHEIVHNKFVVDGLRAKGAIFVEELSECPDDRPVIFSAHGVPKSVPTAAQARNLVYVDATCPLVSKVHIEAQRHADNGLQMIMIGHAGHPETVGTMGQLPEGEVLLVETPEDVATVKVRDPAKLAYVTQTTLSVDDTADVVHALQQRFPLIVGPHKEDICYATTNRQEAVKAMAPKCDAMLVVGAPNSSNSRRLVEVGARAGCQYAQLVQRATDIDWRALDGISSIGITAGASAPEVLINEVIAAFDAHYDVTQEVVETAVENVEFKVPRVLREPA.

Residue Cys17 coordinates [4Fe-4S] cluster. Residues His46 and His79 each coordinate (2E)-4-hydroxy-3-methylbut-2-enyl diphosphate. Positions 46 and 79 each coordinate dimethylallyl diphosphate. Residues His46 and His79 each coordinate isopentenyl diphosphate. Cys101 provides a ligand contact to [4Fe-4S] cluster. His129 serves as a coordination point for (2E)-4-hydroxy-3-methylbut-2-enyl diphosphate. A dimethylallyl diphosphate-binding site is contributed by His129. Residue His129 participates in isopentenyl diphosphate binding. The active-site Proton donor is the Glu131. Residue Thr170 participates in (2E)-4-hydroxy-3-methylbut-2-enyl diphosphate binding. Residue Cys200 coordinates [4Fe-4S] cluster. The (2E)-4-hydroxy-3-methylbut-2-enyl diphosphate site is built by Ser228, Ser229, Asn230, and Ser273. Ser228, Ser229, Asn230, and Ser273 together coordinate dimethylallyl diphosphate. Residues Ser228, Ser229, Asn230, and Ser273 each coordinate isopentenyl diphosphate.

Belongs to the IspH family. Requires [4Fe-4S] cluster as cofactor.

It carries out the reaction isopentenyl diphosphate + 2 oxidized [2Fe-2S]-[ferredoxin] + H2O = (2E)-4-hydroxy-3-methylbut-2-enyl diphosphate + 2 reduced [2Fe-2S]-[ferredoxin] + 2 H(+). It catalyses the reaction dimethylallyl diphosphate + 2 oxidized [2Fe-2S]-[ferredoxin] + H2O = (2E)-4-hydroxy-3-methylbut-2-enyl diphosphate + 2 reduced [2Fe-2S]-[ferredoxin] + 2 H(+). It functions in the pathway isoprenoid biosynthesis; dimethylallyl diphosphate biosynthesis; dimethylallyl diphosphate from (2E)-4-hydroxy-3-methylbutenyl diphosphate: step 1/1. The protein operates within isoprenoid biosynthesis; isopentenyl diphosphate biosynthesis via DXP pathway; isopentenyl diphosphate from 1-deoxy-D-xylulose 5-phosphate: step 6/6. Catalyzes the conversion of 1-hydroxy-2-methyl-2-(E)-butenyl 4-diphosphate (HMBPP) into a mixture of isopentenyl diphosphate (IPP) and dimethylallyl diphosphate (DMAPP). Acts in the terminal step of the DOXP/MEP pathway for isoprenoid precursor biosynthesis. The protein is 4-hydroxy-3-methylbut-2-enyl diphosphate reductase of Roseobacter denitrificans (strain ATCC 33942 / OCh 114) (Erythrobacter sp. (strain OCh 114)).